A 67-amino-acid chain; its full sequence is Alpha-conotoxin-like Qc1.1b (67 aa).

An N-terminal signal peptide occupies residues 1-21 (MGMRMMFTMFLLVVLAITVVS). Residues 22–46 (FTSDHASDGRNTAANDKASKLMALR) constitute a propeptide that is removed on maturation. 2 disulfide bridges follow: Cys-49-Cys-55 and Cys-50-Cys-63. Residues 51–53 (DNP) are lacks the Ser-Xaa-Pro motif that is crucial for potent interaction with nAChR.

It belongs to the conotoxin A superfamily. In terms of tissue distribution, expressed by the venom duct.

The protein localises to the secreted. Functionally, alpha-conotoxins act on postsynaptic membranes, they bind to the nicotinic acetylcholine receptors (nAChR) and thus inhibit them. Has possibly a distinct nAChR binding mode from other alpha-conotoxins, due to a different three residue motif (lacks the Ser-Xaa-Pro motif). This is Alpha-conotoxin-like Qc1.1b from Conus quercinus (Oak cone).